Consider the following 86-residue polypeptide: Mu-theraphotoxin-Hhn1d (86 aa).

Residues methionine 1–alanine 21 form the signal peptide. Positions serine 22–arginine 49 are excised as a propeptide. Intrachain disulfides connect cysteine 51–cysteine 66, cysteine 58–cysteine 73, and cysteine 65–cysteine 80. An Isoleucine amide modification is found at isoleucine 84.

The protein belongs to the neurotoxin 10 (Hwtx-1) family. 22 (Htx-4) subfamily. As to quaternary structure, monomer. Expressed by the venom gland.

The protein localises to the secreted. Neurotoxin. Selectively blocks neuronal tetrodotoxin-sensitive voltage-gated sodium channels (Nav). Does not affect tetrodotoxin-resistant voltage-gated sodium channels or calcium channels. The protein is Mu-theraphotoxin-Hhn1d of Cyriopagopus hainanus (Chinese bird spider).